The sequence spans 535 residues: Xylan 1,3-beta-xylosidase (535 aa).

The Proton acceptor role is filled by Asp16. The active-site Proton donor is the Glu189.

Belongs to the glycosyl hydrolase 43 family.

The enzyme catalyses Hydrolysis of successive xylose residues from the non-reducing termini of (1-&gt;3)-beta-D-xylans.. Its activity is regulated as follows. Inhibited by Ag(+), Cu(2+), Hg(2+), Mn(2+), Pb(2+), Zn(2+) and p-chloromercuric benzoic acid. In terms of biological role, beta-1,3-xylosidase that hydrolyzes beta-1,3-xylooligosaccharides to D-xylose. The protein is Xylan 1,3-beta-xylosidase (xloA) of Vibrio sp.